The chain runs to 377 residues: Histidinol-phosphate aminotransferase (377 aa).

Lysine 232 is subject to N6-(pyridoxal phosphate)lysine.

Belongs to the class-II pyridoxal-phosphate-dependent aminotransferase family. Histidinol-phosphate aminotransferase subfamily. As to quaternary structure, homodimer. Pyridoxal 5'-phosphate serves as cofactor.

The enzyme catalyses L-histidinol phosphate + 2-oxoglutarate = 3-(imidazol-4-yl)-2-oxopropyl phosphate + L-glutamate. It functions in the pathway amino-acid biosynthesis; L-histidine biosynthesis; L-histidine from 5-phospho-alpha-D-ribose 1-diphosphate: step 7/9. The polypeptide is Histidinol-phosphate aminotransferase (Mycobacterium sp. (strain KMS)).